Here is a 291-residue protein sequence, read N- to C-terminus: Cytosolic Fe-S cluster assembly factor CFD1 (291 aa).

Residue 24-31 (GKGGVGKS) participates in ATP binding. [4Fe-4S] cluster-binding residues include cysteine 199 and cysteine 202. The tract at residues 270-291 (ENEEEAKETAEEEKSRAATNGQ) is disordered. Residues 276 to 285 (KETAEEEKSR) show a composition bias toward basic and acidic residues.

The protein belongs to the Mrp/NBP35 ATP-binding proteins family. NUBP2/CFD1 subfamily. Heterotetramer of 2 NBP35 and 2 CFD1 chains. It depends on [4Fe-4S] cluster as a cofactor.

The protein resides in the cytoplasm. In terms of biological role, component of the cytosolic iron-sulfur (Fe/S) protein assembly (CIA) machinery. Required for maturation of extramitochondrial Fe-S proteins. The NBP35-CFD1 heterotetramer forms a Fe-S scaffold complex, mediating the de novo assembly of an Fe-S cluster and its transfer to target apoproteins. Required for biogenesis and export of both ribosomal subunits, which may reflect a role in assembly of the Fe/S clusters in RLI1, a protein which performs rRNA processing and ribosome export. This is Cytosolic Fe-S cluster assembly factor CFD1 from Yarrowia lipolytica (strain CLIB 122 / E 150) (Yeast).